The sequence spans 382 residues: p21-activated protein kinase-interacting protein 1 (382 aa).

WD repeat units lie at residues 37–77 (THHS…EHGA), 80–120 (HHAG…KTFK), 122–160 (HRGH…SAFI), 202–240 (TNGK…CLCE), and 243–284 (AHEN…KVPP). The disordered stretch occupies residues 313 to 382 (LPPAAEPCPD…MSEKKRKKKM (70 aa)). Over residues 352 to 363 (DSKQPTKGNSPV) the composition is skewed to polar residues. Basic residues predominate over residues 365-382 (AKKRKMATMSEKKRKKKM).

As to quaternary structure, interacts with PAK1.

The protein localises to the nucleus. It is found in the nucleolus. In terms of biological role, negatively regulates the PAK1 kinase. PAK1 is a member of the PAK kinase family, which has been shown to play a positive role in the regulation of signaling pathways involving MAPK8 and RELA. PAK1 exists as an inactive homodimer, which is activated by binding of small GTPases such as CDC42 to an N-terminal regulatory domain. PAK1IP1 also binds to the N-terminus of PAK1, and inhibits the specific activation of PAK1 by CDC42. May be involved in ribosomal large subunit assembly. The chain is p21-activated protein kinase-interacting protein 1 (Pak1ip1) from Mus musculus (Mouse).